The following is a 147-amino-acid chain: METLTAISRWLAKQHVVTWCVQQEGELWCANAFYLFDAQKVAFYILTEEKTRHAQMSGPQAAVAGTVNGQPKTVALIRGVQFKGEIRRLEGEESDLARQAYNRRFPVARMLSAPVWEIRLDEIKFTDNTLGFGKKMIWLRNSGTEQA.

It belongs to the UPF0306 family.

The polypeptide is UPF0306 protein YhbP (Escherichia coli O6:K15:H31 (strain 536 / UPEC)).